Reading from the N-terminus, the 347-residue chain is UPF0284 protein LS215_0030 (347 aa).

Belongs to the UPF0284 family.

In Saccharolobus islandicus (strain L.S.2.15 / Lassen #1) (Sulfolobus islandicus), this protein is UPF0284 protein LS215_0030.